Reading from the N-terminus, the 147-residue chain is Leech anti-platelet protein (147 aa).

A signal peptide spans 1–21 (MNSFLFSLACSLLVAIPAISA). The segment at 21 to 71 (AQDEDAGGAGDETSEGEDTTGSDETPSTGGGGDGGNEETITAGNEDCWSKR) is disordered. Positions 22–41 (QDEDAGGAGDETSEGEDTTG) are enriched in acidic residues. Cystine bridges form between C67–C145, C92–C117, and C96–C105.

Post-translationally, the N-terminus is blocked. Expressed by salivary glands.

It is found in the secreted. Functionally, inhibits collagen-stimulated platelet aggregation (IC(50)=60 nM), dense granule release and serotonin release. Does not inhibit platelet aggregation induced by ADP, arachidonic acid, and thrombin. In Haementeria officinalis (Mexican leech), this protein is Leech anti-platelet protein.